Reading from the N-terminus, the 308-residue chain is MVGLQPSEVPPTTVVKFLGAGTAACFADLLTFPLDTAKVRLQIQGENPGAQSVQYRGVLGTILTMVRTEGPRSPYSGLVAGLHRQMSFASIRIGLYDSVKQFYTPKGADHSSVAIRILAGCTTGAMAVTCAQPTDVVKVRFQAMIRLGTGGERKYRGTMDAYRTIAREEGVRGLWKGTWPNITRNAIVNCAEMVTYDIIKEKLLESHLFTDNFPCHFVSAFGAGFCATVVASPVDVVKTRYMNAPLGRYRSPLHCMLKMVAQEGPTAFYKGFVPSFLRLGAWNVMMFVTYEQLKRALMKVQVLRESPF.

Residues 1-10 (MVGLQPSEVP) lie on the Mitochondrial intermembrane side of the membrane. Residues 11 to 32 (PTTVVKFLGAGTAACFADLLTF) form a helical membrane-spanning segment. Solcar repeat units lie at residues 11-102 (PTTV…VKQF), 111-202 (SSVA…IKEK), and 211-296 (DNFP…LKRA). Residues 33–73 (PLDTAKVRLQIQGENPGAQSVQYRGVLGTILTMVRTEGPRS) lie on the Mitochondrial matrix side of the membrane. Residues 74-96 (PYSGLVAGLHRQMSFASIRIGLY) traverse the membrane as a helical segment. The Mitochondrial intermembrane portion of the chain corresponds to 97 to 116 (DSVKQFYTPKGADHSSVAIR). Residues 117–133 (ILAGCTTGAMAVTCAQP) traverse the membrane as a helical segment. The Mitochondrial matrix portion of the chain corresponds to 134–179 (TDVVKVRFQAMIRLGTGGERKYRGTMDAYRTIAREEGVRGLWKGTW). Residues 180–196 (PNITRNAIVNCAEMVTY) traverse the membrane as a helical segment. Residues 197–213 (DIIKEKLLESHLFTDNF) are Mitochondrial intermembrane-facing. A helical membrane pass occupies residues 214–233 (PCHFVSAFGAGFCATVVASP). Over 234-267 (VDVVKTRYMNAPLGRYRSPLHCMLKMVAQEGPTA) the chain is Mitochondrial matrix. Residues 268-290 (FYKGFVPSFLRLGAWNVMMFVTY) traverse the membrane as a helical segment. Residues 275-297 (SFLRLGAWNVMMFVTYEQLKRAL) form a purine nucleotide binding region. The Mitochondrial intermembrane segment spans residues 291–308 (EQLKRALMKVQVLRESPF).

This sequence belongs to the mitochondrial carrier (TC 2.A.29) family. In terms of assembly, interacts with HAX1; the interaction is direct and calcium-dependent.

The protein localises to the mitochondrion inner membrane. Inhibited by purine nucleotides and inorganic phosphate (in vitro). Putative transmembrane transporter that plays a role in mitochondrial metabolism via an as yet unclear mechanism. Originally, this mitochondrial protein was thought to act as a proton transmembrane transporter from the mitochondrial intermembrane space into the matrix, causing proton leaks through the inner mitochondrial membrane, thereby uncoupling mitochondrial membrane potential generation from ATP synthesis. However, this function is controversial and uncoupling may not be the function, or at least not the main function, but rather a consequence of more conventional metabolite transporter activity. This Mus musculus (Mouse) protein is Putative mitochondrial transporter UCP3.